A 408-amino-acid polypeptide reads, in one-letter code: LL-diaminopimelate aminotransferase (408 aa).

Substrate is bound by residues tyrosine 15 and glycine 42. Pyridoxal 5'-phosphate is bound by residues tyrosine 72, 108–109 (SK), tyrosine 132, asparagine 187, tyrosine 218, and 246–248 (SFS). Positions 109, 132, and 187 each coordinate substrate. Position 249 is an N6-(pyridoxal phosphate)lysine (lysine 249). The pyridoxal 5'-phosphate site is built by arginine 257 and asparagine 291. Substrate is bound by residues asparagine 291 and arginine 387.

It belongs to the class-I pyridoxal-phosphate-dependent aminotransferase family. LL-diaminopimelate aminotransferase subfamily. Homodimer. Requires pyridoxal 5'-phosphate as cofactor.

It carries out the reaction (2S,6S)-2,6-diaminopimelate + 2-oxoglutarate = (S)-2,3,4,5-tetrahydrodipicolinate + L-glutamate + H2O + H(+). The protein operates within amino-acid biosynthesis; L-lysine biosynthesis via DAP pathway; LL-2,6-diaminopimelate from (S)-tetrahydrodipicolinate (aminotransferase route): step 1/1. Involved in the synthesis of meso-diaminopimelate (m-DAP or DL-DAP), required for both lysine and peptidoglycan biosynthesis. Catalyzes the direct conversion of tetrahydrodipicolinate to LL-diaminopimelate. In Prochlorococcus marinus (strain NATL1A), this protein is LL-diaminopimelate aminotransferase.